A 218-amino-acid chain; its full sequence is Adenylate kinase (218 aa).

Residue glycine 10–threonine 15 coordinates ATP. The tract at residues serine 30–valine 59 is NMP. AMP-binding positions include threonine 31, arginine 36, lysine 57 to valine 59, glycine 85 to arginine 88, and glutamine 92. Positions glycine 122 to aspartate 159 are LID. ATP-binding positions include arginine 123 and threonine 132–tyrosine 133. The interval proline 127–aspartate 147 is disordered. AMP-binding residues include arginine 156 and arginine 167. Glycine 203 is a binding site for ATP.

It belongs to the adenylate kinase family. As to quaternary structure, monomer.

It localises to the cytoplasm. The catalysed reaction is AMP + ATP = 2 ADP. Its pathway is purine metabolism; AMP biosynthesis via salvage pathway; AMP from ADP: step 1/1. Catalyzes the reversible transfer of the terminal phosphate group between ATP and AMP. Plays an important role in cellular energy homeostasis and in adenine nucleotide metabolism. The sequence is that of Adenylate kinase from Paracidovorax citrulli (strain AAC00-1) (Acidovorax citrulli).